Consider the following 283-residue polypeptide: D-alanine aminotransferase (283 aa).

Residue Y32 coordinates substrate. R51 lines the pyridoxal 5'-phosphate pocket. Substrate-binding residues include R99 and H101. Residue K146 is the Proton acceptor of the active site. K146 bears the N6-(pyridoxal phosphate)lysine mark. Residue E178 participates in pyridoxal 5'-phosphate binding.

The protein belongs to the class-IV pyridoxal-phosphate-dependent aminotransferase family. In terms of assembly, homodimer. Pyridoxal 5'-phosphate serves as cofactor.

The catalysed reaction is D-alanine + 2-oxoglutarate = D-glutamate + pyruvate. Acts on the D-isomers of alanine, leucine, aspartate, glutamate, aminobutyrate, norvaline and asparagine. The enzyme transfers an amino group from a substrate D-amino acid to the pyridoxal phosphate cofactor to form pyridoxamine and an alpha-keto acid in the first half-reaction. The second-half reaction is the reverse of the first, transferring the amino group from the pyridoxamine to a second alpha-keto acid to form the product D-amino acid via a ping-pong mechanism. This is an important process in the formation of D-alanine and D-glutamate, which are essential bacterial cell wall components. The polypeptide is D-alanine aminotransferase (dat) (Bacillus sp. (strain YM-1)).